The chain runs to 309 residues: NADH-cytochrome b5 reductase 1 (309 aa).

A helical transmembrane segment spans residues 30–50 (FVPYAVAVTAILAGLKLFTGG). The region spanning 60-165 (TEFQEFVLKE…RGPKGAMVYT (106 aa)) is the FAD-binding FR-type domain. FAD contacts are provided by residues 145–160 (TTLK…GPKG) and 171–208 (HIGM…KLDL).

Belongs to the flavoprotein pyridine nucleotide cytochrome reductase family. Monomer. Component of the 2-(3-amino-3-carboxypropyl)histidine synthase complex composed of dph1, dph2, dph3 and a NADH-dependent reductase, predominantly cbr1. FAD serves as cofactor.

The protein localises to the mitochondrion outer membrane. It catalyses the reaction 2 Fe(III)-[cytochrome b5] + NADH = 2 Fe(II)-[cytochrome b5] + NAD(+) + H(+). It carries out the reaction 2 Fe(3+)-[Dph3] + NADH = 2 Fe(2+)-[Dph3] + NAD(+) + H(+). The protein operates within protein modification; peptidyl-diphthamide biosynthesis. Functionally, NADH-dependent reductase for dph3 and cytochrome b5. Required for the first step of diphthamide biosynthesis, a post-translational modification of histidine which occurs in elongation factor 2. Dph1 and dph2 transfer a 3-amino-3-carboxypropyl (ACP) group from S-adenosyl-L-methionine (SAM) to a histidine residue, the reaction is assisted by a reduction system comprising dph3 and a NADH-dependent reductase, predominantly cbr1. By reducing dph3, also involved in the formation of the tRNA wobble base modification mcm5s 2U (5-methoxycarbonylmethyl-2-thiouridine), mediated by the elongator complex. The cytochrome b5/NADH cytochrome b5 reductase electron transfer system supports the catalytic activity of several sterol biosynthetic enzymes. The protein is NADH-cytochrome b5 reductase 1 (cbr1) of Aspergillus fumigatus (strain ATCC MYA-4609 / CBS 101355 / FGSC A1100 / Af293) (Neosartorya fumigata).